The following is a 201-amino-acid chain: Small ribosomal subunit protein uS4 (201 aa).

In terms of domain architecture, S4 RNA-binding spans 91-151; it reads SRLDNVVYRA…EKSRSMLWFE (61 aa).

It belongs to the universal ribosomal protein uS4 family. In terms of assembly, part of the 30S ribosomal subunit. Contacts protein S5. The interaction surface between S4 and S5 is involved in control of translational fidelity.

In terms of biological role, one of the primary rRNA binding proteins, it binds directly to 16S rRNA where it nucleates assembly of the body of the 30S subunit. Functionally, with S5 and S12 plays an important role in translational accuracy. The polypeptide is Small ribosomal subunit protein uS4 (Corynebacterium jeikeium (strain K411)).